Reading from the N-terminus, the 95-residue chain is Co-chaperonin GroES (95 aa).

It belongs to the GroES chaperonin family. In terms of assembly, heptamer of 7 subunits arranged in a ring. Interacts with the chaperonin GroEL.

It is found in the cytoplasm. Its function is as follows. Together with the chaperonin GroEL, plays an essential role in assisting protein folding. The GroEL-GroES system forms a nano-cage that allows encapsulation of the non-native substrate proteins and provides a physical environment optimized to promote and accelerate protein folding. GroES binds to the apical surface of the GroEL ring, thereby capping the opening of the GroEL channel. The chain is Co-chaperonin GroES from Chlorobium limicola (strain DSM 245 / NBRC 103803 / 6330).